The following is a 317-amino-acid chain: 3',5'-bisphosphate nucleotidase (317 aa).

Residue aspartate 46 is the Proton acceptor of the active site. Mg(2+)-binding residues include glutamate 69, aspartate 118, isoleucine 120, and aspartate 121. Threonine 123 functions as the Proton acceptor in the catalytic mechanism. Threonine 123 serves as a coordination point for adenosine 3',5'-bisphosphate. 7 residues coordinate AMP: serine 198, histidine 203, serine 227, lysine 230, arginine 244, tyrosine 251, and aspartate 257. Adenosine 3',5'-bisphosphate contacts are provided by histidine 203, serine 227, lysine 230, and arginine 244. Residue aspartate 257 participates in Mg(2+) binding. Aspartate 257 contacts adenosine 3',5'-bisphosphate.

This sequence belongs to the inositol monophosphatase superfamily. Monomer. It depends on Mg(2+) as a cofactor.

Its subcellular location is the cytoplasm. It catalyses the reaction adenosine 3',5'-bisphosphate + H2O = AMP + phosphate. It carries out the reaction 1D-myo-inositol 1,4-bisphosphate + H2O = 1D-myo-inositol 4-phosphate + phosphate. With respect to regulation, inhibited by Li(2+). Functionally, phosphatase that converts 3'-phosphoadenosine 5'-phosphate (PAP) to AMP. Is also able to hydrolyze inositol 1,4-bisphosphate but with less efficiency. This is 3',5'-bisphosphate nucleotidase from Entamoeba histolytica (strain ATCC 30459 / HM-1:IMSS / ABRM).